Consider the following 488-residue polypeptide: Inosine-5'-monophosphate dehydrogenase (488 aa).

CBS domains follow at residues 93 to 149 (VVTD…NQPV) and 153 to 214 (MTPK…CKDE). Residues D248 and 248-250 (DSS) each bind NAD(+). At K267 the chain carries N6-acetyllysine. 298–300 (GIG) is an NAD(+) binding site. Positions 300 and 302 each coordinate K(+). S303 lines the IMP pocket. Position 305 (C305) interacts with K(+). The Thioimidate intermediate role is filled by C305. Residues 338-340 (DGG), 361-362 (GS), and 385-389 (YRGMG) contribute to the IMP site. The active-site Proton acceptor is the R401. E415 contributes to the IMP binding site. At K428 the chain carries N6-acetyllysine. Positions 469, 470, and 471 each coordinate K(+).

It belongs to the IMPDH/GMPR family. As to quaternary structure, homotetramer. It depends on K(+) as a cofactor.

The enzyme catalyses IMP + NAD(+) + H2O = XMP + NADH + H(+). It participates in purine metabolism; XMP biosynthesis via de novo pathway; XMP from IMP: step 1/1. Its activity is regulated as follows. Mycophenolic acid (MPA) is a non-competitive inhibitor that prevents formation of the closed enzyme conformation by binding to the same site as the amobile flap. In contrast, mizoribine monophosphate (MZP) is a competitive inhibitor that induces the closed conformation. MPA is a potent inhibitor of mammalian IMPDHs but a poor inhibitor of the bacterial enzymes. MZP is a more potent inhibitor of bacterial IMPDH. Functionally, catalyzes the conversion of inosine 5'-phosphate (IMP) to xanthosine 5'-phosphate (XMP), the first committed and rate-limiting step in the de novo synthesis of guanine nucleotides, and therefore plays an important role in the regulation of cell growth. The sequence is that of Inosine-5'-monophosphate dehydrogenase from Escherichia coli O157:H7.